Here is a 279-residue protein sequence, read N- to C-terminus: Thymidylate synthase (279 aa).

Arg-29 is a binding site for dUMP. His-59 contributes to the (6R)-5,10-methylene-5,6,7,8-tetrahydrofolate binding site. 134–135 lines the dUMP pocket; the sequence is RR. Cys-154 acts as the Nucleophile in catalysis. DUMP contacts are provided by residues 181 to 184, Asn-192, and 222 to 224; these read RSAD and HIY. Asp-184 is a binding site for (6R)-5,10-methylene-5,6,7,8-tetrahydrofolate. Ala-278 serves as a coordination point for (6R)-5,10-methylene-5,6,7,8-tetrahydrofolate.

It belongs to the thymidylate synthase family. Bacterial-type ThyA subfamily. As to quaternary structure, homodimer.

The protein localises to the cytoplasm. The catalysed reaction is dUMP + (6R)-5,10-methylene-5,6,7,8-tetrahydrofolate = 7,8-dihydrofolate + dTMP. It participates in pyrimidine metabolism; dTTP biosynthesis. In terms of biological role, catalyzes the reductive methylation of 2'-deoxyuridine-5'-monophosphate (dUMP) to 2'-deoxythymidine-5'-monophosphate (dTMP) while utilizing 5,10-methylenetetrahydrofolate (mTHF) as the methyl donor and reductant in the reaction, yielding dihydrofolate (DHF) as a by-product. This enzymatic reaction provides an intracellular de novo source of dTMP, an essential precursor for DNA biosynthesis. In Paracidovorax citrulli (strain AAC00-1) (Acidovorax citrulli), this protein is Thymidylate synthase.